Here is a 217-residue protein sequence, read N- to C-terminus: ATP-dependent Clp protease proteolytic subunit (217 aa).

Serine 119 acts as the Nucleophile in catalysis. Histidine 144 is a catalytic residue.

This sequence belongs to the peptidase S14 family. Fourteen ClpP subunits assemble into 2 heptameric rings which stack back to back to give a disk-like structure with a central cavity, resembling the structure of eukaryotic proteasomes.

The protein resides in the cytoplasm. It carries out the reaction Hydrolysis of proteins to small peptides in the presence of ATP and magnesium. alpha-casein is the usual test substrate. In the absence of ATP, only oligopeptides shorter than five residues are hydrolyzed (such as succinyl-Leu-Tyr-|-NHMec, and Leu-Tyr-Leu-|-Tyr-Trp, in which cleavage of the -Tyr-|-Leu- and -Tyr-|-Trp bonds also occurs).. Its function is as follows. Cleaves peptides in various proteins in a process that requires ATP hydrolysis. Has a chymotrypsin-like activity. Plays a major role in the degradation of misfolded proteins. The sequence is that of ATP-dependent Clp protease proteolytic subunit from Bordetella bronchiseptica (strain ATCC BAA-588 / NCTC 13252 / RB50) (Alcaligenes bronchisepticus).